Consider the following 196-residue polypeptide: Mpv17-like protein (196 aa).

Residues 1-16 are Cytoplasmic-facing; sequence MAGWWPALSRAARRHP. Residues 16-55 are targeting to peroxisomes; sequence PWPTNVLLYGSLVSAGDALQQRLQGREANWRQTRRVATLV. A helical membrane pass occupies residues 17–34; the sequence is WPTNVLLYGSLVSAGDAL. Residues 35–50 are Lumenal-facing; it reads QQRLQGREANWRQTRR. Residues 51–67 traverse the membrane as a helical segment; the sequence is VATLVVTFHANFNYVWL. At 68-90 the chain is on the cytoplasmic side; that stretch reads RLLERALPGRAPHALLAKLLCDQ. The chain crosses the membrane as a helical span at residues 91–108; it reads VVGAPIAVSAFYVGMSIL. Topologically, residues 109-150 are lumenal; it reads QGKDDIFLDLKQKFWNTYLSGLMYWPFVQLTNFSLVPVQWRT. A helical membrane pass occupies residues 151 to 167; that stretch reads AYAGVCGFLWATFICFS. Over 168–196 the chain is Cytoplasmic; sequence QQSGDGTFKSAFTILYTKGTSATEGYPKK.

This sequence belongs to the peroxisomal membrane protein PXMP2/4 family. Isoform 1 is detected in the kidney (at protein level). Isoform 1 and isoform 2 are expressed in the kidney, heart, liver, lung, pancreas and skeletal muscle.

The protein localises to the peroxisome membrane. Participates in reactive oxygen species metabolism by up- or down-regulation of the genes of antioxidant enzymes. Protective against the mitochondrial apoptotic cascade. The chain is Mpv17-like protein (MPV17L) from Homo sapiens (Human).